The primary structure comprises 115 residues: U3-lycotoxin-Ls1a (115 aa).

The signal sequence occupies residues 1-20; the sequence is MKFVLLFGVLLLTLFSYSSA. Residues 21 to 44 constitute a propeptide that is removed on maturation; sequence EMLDDFDQADEDELLSLIEKEEAR. 4 disulfide bridges follow: Cys-48/Cys-63, Cys-55/Cys-72, Cys-62/Cys-87, and Cys-74/Cys-85.

The protein belongs to the neurotoxin 19 (CSTX) family. 01 subfamily. Expressed by the venom gland.

The protein resides in the secreted. The sequence is that of U3-lycotoxin-Ls1a from Lycosa singoriensis (Wolf spider).